The chain runs to 156 residues: SsrA-binding protein (156 aa).

This sequence belongs to the SmpB family.

Its subcellular location is the cytoplasm. Functionally, required for rescue of stalled ribosomes mediated by trans-translation. Binds to transfer-messenger RNA (tmRNA), required for stable association of tmRNA with ribosomes. tmRNA and SmpB together mimic tRNA shape, replacing the anticodon stem-loop with SmpB. tmRNA is encoded by the ssrA gene; the 2 termini fold to resemble tRNA(Ala) and it encodes a 'tag peptide', a short internal open reading frame. During trans-translation Ala-aminoacylated tmRNA acts like a tRNA, entering the A-site of stalled ribosomes, displacing the stalled mRNA. The ribosome then switches to translate the ORF on the tmRNA; the nascent peptide is terminated with the 'tag peptide' encoded by the tmRNA and targeted for degradation. The ribosome is freed to recommence translation, which seems to be the essential function of trans-translation. The chain is SsrA-binding protein from Thermoanaerobacter pseudethanolicus (strain ATCC 33223 / 39E) (Clostridium thermohydrosulfuricum).